A 249-amino-acid polypeptide reads, in one-letter code: Seipin homolog (249 aa).

Topologically, residues 1 to 10 are cytoplasmic; the sequence is MGYLVKLFKL. Residues 11–31 form a helical membrane-spanning segment; sequence VVWMLVIGLFSIPSLVSYVIF. The Lumenal segment spans residues 32–212; sequence YDTVIPHSVI…GMRWFMYTHK (181 aa). A helical transmembrane segment spans residues 213-233; the sequence is VSAFLVFTSLFWFTGITSTII. Residues 234–249 lie on the Cytoplasmic side of the membrane; the sequence is TYLIVSSTSETKATRR.

The protein belongs to the seipin family.

It is found in the endoplasmic reticulum membrane. In terms of biological role, involved in lipid metabolism and lipid droplet (LD) morphology, number, and size. Facilitates initiation of LD formation, and ensures that vectorial budding of LDs from the ER is directed towards the cytoplasm. This is Seipin homolog from Schizosaccharomyces pombe (strain 972 / ATCC 24843) (Fission yeast).